The chain runs to 112 residues: Divalent-cation tolerance protein CutA (112 aa).

Residues Cys16, His83, and His84 each contribute to the Cu cation site.

Belongs to the CutA family. In terms of assembly, homotrimer. Cu cation is required as a cofactor.

It is found in the cytoplasm. In terms of biological role, involved in resistance toward heavy metals. The chain is Divalent-cation tolerance protein CutA from Shigella boydii serotype 18 (strain CDC 3083-94 / BS512).